The sequence spans 140 residues: Putative pre-16S rRNA nuclease (140 aa).

Belongs to the YqgF nuclease family.

It is found in the cytoplasm. Functionally, could be a nuclease involved in processing of the 5'-end of pre-16S rRNA. This Pasteurella multocida (strain Pm70) protein is Putative pre-16S rRNA nuclease.